The primary structure comprises 172 residues: Large ribosomal subunit protein uL10 (172 aa).

It belongs to the universal ribosomal protein uL10 family. As to quaternary structure, part of the ribosomal stalk of the 50S ribosomal subunit. The N-terminus interacts with L11 and the large rRNA to form the base of the stalk. The C-terminus forms an elongated spine to which L12 dimers bind in a sequential fashion forming a multimeric L10(L12)X complex.

In terms of biological role, forms part of the ribosomal stalk, playing a central role in the interaction of the ribosome with GTP-bound translation factors. This is Large ribosomal subunit protein uL10 from Brucella abortus (strain S19).